A 36-amino-acid chain; its full sequence is Photosystem II reaction center protein M (36 aa).

The chain crosses the membrane as a helical span at residues 5–25 (ILAFIATALFILVPTAFLLII).

This sequence belongs to the PsbM family. In terms of assembly, PSII is composed of 1 copy each of membrane proteins PsbA, PsbB, PsbC, PsbD, PsbE, PsbF, PsbH, PsbI, PsbJ, PsbK, PsbL, PsbM, PsbT, PsbX, PsbY, PsbZ, Psb30/Ycf12, at least 3 peripheral proteins of the oxygen-evolving complex and a large number of cofactors. It forms dimeric complexes.

The protein resides in the plastid. It localises to the chloroplast thylakoid membrane. In terms of biological role, one of the components of the core complex of photosystem II (PSII). PSII is a light-driven water:plastoquinone oxidoreductase that uses light energy to abstract electrons from H(2)O, generating O(2) and a proton gradient subsequently used for ATP formation. It consists of a core antenna complex that captures photons, and an electron transfer chain that converts photonic excitation into a charge separation. This subunit is found at the monomer-monomer interface. The chain is Photosystem II reaction center protein M from Panax ginseng (Korean ginseng).